Consider the following 295-residue polypeptide: MINQIQKTISVCIIGRPNSGKSTLLNRIIGEKLSIVTPKVQTTRSIITGIITLKDTQIILYDTPGIFEPKGMLEKAMVRCAWSSLYSADLVLSIIDSLKPLDDMAHNILNQFCLLNIVPIFLLNKIDIESKYLNDIKAFLKISHPKSLLFPISALCGKNVDVLLKYIKSKAKVSPWLYADDDITNLPMRFIAAEITREQLFLNLQQELPYKLTVQTEKFEELKDKSIKINQVIVISRESYKAIILGKNGTKIKDIGVKSRIQMEQLFCVPVHLFLFVKVHALWENKQEFYQYMKI.

The region spanning 7–176 is the Era-type G domain; the sequence is KTISVCIIGR…IKSKAKVSPW (170 aa). Residues 15–22 are G1; that stretch reads GRPNSGKS. Position 15 to 22 (15 to 22) interacts with GTP; that stretch reads GRPNSGKS. Residues 41–45 form a G2 region; it reads QTTRS. The segment at 62-65 is G3; that stretch reads DTPG. GTP contacts are provided by residues 62–66 and 124–127; these read DTPGI and NKID. A G4 region spans residues 124-127; the sequence is NKID. The segment at 152–154 is G5; sequence ISA. Residues 204 to 281 enclose the KH type-2 domain; sequence LQQELPYKLT…HLFLFVKVHA (78 aa).

This sequence belongs to the TRAFAC class TrmE-Era-EngA-EngB-Septin-like GTPase superfamily. Era GTPase family. Monomer.

The protein localises to the cytoplasm. The protein resides in the cell inner membrane. An essential GTPase that binds both GDP and GTP, with rapid nucleotide exchange. Plays a role in 16S rRNA processing and 30S ribosomal subunit biogenesis and possibly also in cell cycle regulation and energy metabolism. This is GTPase Era from Rickettsia typhi (strain ATCC VR-144 / Wilmington).